The sequence spans 255 residues: uncharacterized protein (255 aa).

The signal sequence occupies residues 1 to 22 (MNILSPIIIIIILIVLFYVMRM).

This is an uncharacterized protein from Acanthamoeba polyphaga (Amoeba).